Here is a 304-residue protein sequence, read N- to C-terminus: Porphobilinogen deaminase (304 aa).

Cys-241 is modified (S-(dipyrrolylmethanemethyl)cysteine).

Belongs to the HMBS family. In terms of assembly, monomer. Requires dipyrromethane as cofactor.

It carries out the reaction 4 porphobilinogen + H2O = hydroxymethylbilane + 4 NH4(+). The protein operates within porphyrin-containing compound metabolism; protoporphyrin-IX biosynthesis; coproporphyrinogen-III from 5-aminolevulinate: step 2/4. Its function is as follows. Tetrapolymerization of the monopyrrole PBG into the hydroxymethylbilane pre-uroporphyrinogen in several discrete steps. The protein is Porphobilinogen deaminase of Ruthia magnifica subsp. Calyptogena magnifica.